The sequence spans 493 residues: Cobyric acid synthase (493 aa).

In terms of domain architecture, GATase cobBQ-type spans 246-440 (PIDIAVIKMP…IHGVFDGVVF (195 aa)). The active-site Nucleophile is the C326. H432 is a catalytic residue.

The protein belongs to the CobB/CobQ family. CobQ subfamily.

The protein operates within cofactor biosynthesis; adenosylcobalamin biosynthesis. Functionally, catalyzes amidations at positions B, D, E, and G on adenosylcobyrinic A,C-diamide. NH(2) groups are provided by glutamine, and one molecule of ATP is hydrogenolyzed for each amidation. The polypeptide is Cobyric acid synthase (Clostridium botulinum (strain ATCC 19397 / Type A)).